The chain runs to 76 residues: Small ribosomal subunit protein bS18 (76 aa).

This sequence belongs to the bacterial ribosomal protein bS18 family. Part of the 30S ribosomal subunit. Forms a tight heterodimer with protein bS6.

Functionally, binds as a heterodimer with protein bS6 to the central domain of the 16S rRNA, where it helps stabilize the platform of the 30S subunit. This chain is Small ribosomal subunit protein bS18, found in Xanthomonas campestris pv. campestris (strain 8004).